The chain runs to 142 residues: Large ribosomal subunit protein uL13 (142 aa).

Belongs to the universal ribosomal protein uL13 family. Part of the 50S ribosomal subunit.

This protein is one of the early assembly proteins of the 50S ribosomal subunit, although it is not seen to bind rRNA by itself. It is important during the early stages of 50S assembly. The protein is Large ribosomal subunit protein uL13 of Actinobacillus pleuropneumoniae serotype 5b (strain L20).